The primary structure comprises 416 residues: Na(+)/H(+) antiporter NhaA (416 aa).

Helical transmembrane passes span 18–38 (VGGA…NSPW), 59–79 (LTLA…VAGL), 97–117 (ALPI…AAVI), 127–147 (GWAI…ALTG), 167–187 (LLAI…LWLL), 265–285 (GICV…ATVF), 297–317 (VMLG…WVAI), 333–353 (MFAL…VAEL), and 363–383 (LAKA…SALL). The interval 396 to 416 (ALELQPDEGDASDPSEGGSLR) is disordered.

It belongs to the NhaA Na(+)/H(+) (TC 2.A.33) antiporter family.

It localises to the cell membrane. It catalyses the reaction Na(+)(in) + 2 H(+)(out) = Na(+)(out) + 2 H(+)(in). Na(+)/H(+) antiporter that extrudes sodium in exchange for external protons. The chain is Na(+)/H(+) antiporter NhaA from Nocardia farcinica (strain IFM 10152).